Here is a 70-residue protein sequence, read N- to C-terminus: MPGAMKIFFFIFAALILLAQIFQARTAIHRALISKRMEGHCEAECLTFEVKTGGCRAELAPFCCKNRKKH.

A signal peptide spans Met1–Thr26. 2 cysteine pairs are disulfide-bonded: Cys41–Cys55 and Cys45–Cys64.

The protein belongs to the beta-defensin family.

The protein localises to the secreted. Functionally, has antibacterial activity. This is Beta-defensin 107A (DEFB107A) from Pan troglodytes (Chimpanzee).